The chain runs to 142 residues: Large ribosomal subunit protein uL13 (142 aa).

The protein belongs to the universal ribosomal protein uL13 family. In terms of assembly, part of the 50S ribosomal subunit.

This protein is one of the early assembly proteins of the 50S ribosomal subunit, although it is not seen to bind rRNA by itself. It is important during the early stages of 50S assembly. The polypeptide is Large ribosomal subunit protein uL13 (Francisella tularensis subsp. mediasiatica (strain FSC147)).